A 1296-amino-acid polypeptide reads, in one-letter code: Protein broad-minded (1296 aa).

The Rab-GAP TBC domain maps to 1158-1281 (GIHPIYFCSA…YMENLEQNYR (124 aa)).

As to quaternary structure, interacts with CDK20, which promotes CDK20 stability and function. Interacts with FAM149B1; may play a role in cilium assembly.

It is found in the cytoplasm. The protein resides in the cell projection. Its subcellular location is the cilium. In terms of biological role, required for high-level Shh responses in the developing neural tube. Together with CDK20, controls the structure of the primary cilium by coordinating assembly of the ciliary membrane and axoneme, allowing GLI2 to be properly activated in response to Shh signaling. The polypeptide is Protein broad-minded (Tbc1d32) (Mus musculus (Mouse)).